Reading from the N-terminus, the 306-residue chain is MNARHFLSMMDYTPDELLGLIRRGVELKDLRNRGVLFEPLKNRVLGMIFEKSSTRTRLSFEAGMIQLGGQAIFLSHRDTQLGRGEPIADSAKVISRMLDAVMIRTYAHDNLTEFAANSRVPVINGLSDDLHPCQLLADMQTFLEHRGSIKGKTVAWIGDGNNMCNSYIEAAIQFDFQLRVACPAGYEPNPEFLALAGERVTVVRDPKAAVAGAHLVSTDVWTSMGQEEETARRKALFAPFQVTRALLDLADKDVLFMHCLPAHRGEEISVDLLDDARSVAWDQAENRLHAQKALLEFLVAPCFQPA.

Carbamoyl phosphate-binding positions include 53–56 (STRT), Gln80, Arg104, and 131–134 (HPCQ). L-ornithine is bound by residues Asn162, Asp219, and 223-224 (SM). Residues 259–260 (CL) and Arg287 contribute to the carbamoyl phosphate site.

This sequence belongs to the aspartate/ornithine carbamoyltransferase superfamily. OTCase family.

It is found in the cytoplasm. The catalysed reaction is carbamoyl phosphate + L-ornithine = L-citrulline + phosphate + H(+). Its pathway is amino-acid biosynthesis; L-arginine biosynthesis; L-arginine from L-ornithine and carbamoyl phosphate: step 1/3. Its function is as follows. Reversibly catalyzes the transfer of the carbamoyl group from carbamoyl phosphate (CP) to the N(epsilon) atom of ornithine (ORN) to produce L-citrulline. This chain is Ornithine carbamoyltransferase, found in Pseudomonas syringae pv. tomato (strain ATCC BAA-871 / DC3000).